The chain runs to 367 residues: Flagellar P-ring protein (367 aa).

A signal peptide spans 1–22; the sequence is MRRMLVIRWILAIHLIATQVFA.

The protein belongs to the FlgI family. In terms of assembly, the basal body constitutes a major portion of the flagellar organelle and consists of four rings (L,P,S, and M) mounted on a central rod.

It localises to the periplasm. The protein resides in the bacterial flagellum basal body. Functionally, assembles around the rod to form the L-ring and probably protects the motor/basal body from shearing forces during rotation. This chain is Flagellar P-ring protein, found in Legionella pneumophila subsp. pneumophila (strain Philadelphia 1 / ATCC 33152 / DSM 7513).